We begin with the raw amino-acid sequence, 153 residues long: NAD(P)H-quinone oxidoreductase subunit N (153 aa).

The protein belongs to the complex I NdhN subunit family. NDH-1 can be composed of about 15 different subunits; different subcomplexes with different compositions have been identified which probably have different functions.

Its subcellular location is the cellular thylakoid membrane. The enzyme catalyses a plastoquinone + NADH + (n+1) H(+)(in) = a plastoquinol + NAD(+) + n H(+)(out). The catalysed reaction is a plastoquinone + NADPH + (n+1) H(+)(in) = a plastoquinol + NADP(+) + n H(+)(out). In terms of biological role, NDH-1 shuttles electrons from an unknown electron donor, via FMN and iron-sulfur (Fe-S) centers, to quinones in the respiratory and/or the photosynthetic chain. The immediate electron acceptor for the enzyme in this species is believed to be plastoquinone. Couples the redox reaction to proton translocation, and thus conserves the redox energy in a proton gradient. Cyanobacterial NDH-1 also plays a role in inorganic carbon-concentration. This Synechococcus sp. (strain CC9605) protein is NAD(P)H-quinone oxidoreductase subunit N.